The sequence spans 799 residues: Serine/threonine-protein kinase AfsK (799 aa).

A Protein kinase domain is found at 16 to 271; it reads FEVLGRLGAG…QAQLAPHLFG (256 aa). Residues 22-30 and lysine 44 contribute to the ATP site; that span reads LGAGGMGLV. Serine 71 carries the phosphoserine; by autocatalysis modification. The active-site Proton acceptor is aspartate 138. Position 168 is a phosphothreonine; by autocatalysis (threonine 168). 2 disordered regions span residues 295–343 and 393–426; these read RRNG…PAPP and LAASWSRPRPGVNGADPAVPAPAPAPPEASPAGW. 2 stretches are compositionally biased toward pro residues: residues 325 to 343 and 411 to 421; these read HAPPLPPPPAHDPVVPAPP and VPAPAPAPPEA.

It belongs to the protein kinase superfamily. Ser/Thr protein kinase family. In terms of assembly, interacts (via the N-terminal kinase domain) with KbpA; the interaction prevents autophosphorylation of AfsK. Post-translationally, autophosphorylated mainly on threonine residues. Some phosphorylation on serine residues. Autophosphorylation on Thr-168 is the major site enhancing kinase activity towards AfsR, and is regulated though interaction with KbpA.

It catalyses the reaction L-seryl-[protein] + ATP = O-phospho-L-seryl-[protein] + ADP + H(+). The catalysed reaction is L-threonyl-[protein] + ATP = O-phospho-L-threonyl-[protein] + ADP + H(+). Functionally, involved in the regulation of secondary metabolism by phosphorylating, on both Ser and Thr, the AfsR global regulatory protein involved in the control of secondary metabolism. In Streptomyces coelicolor (strain ATCC BAA-471 / A3(2) / M145), this protein is Serine/threonine-protein kinase AfsK (afsK).